The sequence spans 132 residues: Fluoride-specific ion channel FluC 2 (132 aa).

The next 4 membrane-spanning stretches (helical) occupy residues 8–28, 41–61, 66–86, and 96–116; these read LQLE…GALL, LLVN…PAAP, LLGI…LAAV, and AALG…ALGF. Na(+) is bound by residues Gly-73 and Thr-76.

This sequence belongs to the fluoride channel Fluc/FEX (TC 1.A.43) family.

It is found in the cell inner membrane. It catalyses the reaction fluoride(in) = fluoride(out). Its activity is regulated as follows. Na(+) is not transported, but it plays an essential structural role and its presence is essential for fluoride channel function. Its function is as follows. Fluoride-specific ion channel. Important for reducing fluoride concentration in the cell, thus reducing its toxicity. This Synechococcus sp. (strain CC9605) protein is Fluoride-specific ion channel FluC 2.